The chain runs to 186 residues: ATP synthase subunit delta (186 aa).

Belongs to the ATPase delta chain family. F-type ATPases have 2 components, F(1) - the catalytic core - and F(0) - the membrane proton channel. F(1) has five subunits: alpha(3), beta(3), gamma(1), delta(1), epsilon(1). F(0) has three main subunits: a(1), b(2) and c(10-14). The alpha and beta chains form an alternating ring which encloses part of the gamma chain. F(1) is attached to F(0) by a central stalk formed by the gamma and epsilon chains, while a peripheral stalk is formed by the delta and b chains.

It is found in the cell inner membrane. Its function is as follows. F(1)F(0) ATP synthase produces ATP from ADP in the presence of a proton or sodium gradient. F-type ATPases consist of two structural domains, F(1) containing the extramembraneous catalytic core and F(0) containing the membrane proton channel, linked together by a central stalk and a peripheral stalk. During catalysis, ATP synthesis in the catalytic domain of F(1) is coupled via a rotary mechanism of the central stalk subunits to proton translocation. This protein is part of the stalk that links CF(0) to CF(1). It either transmits conformational changes from CF(0) to CF(1) or is implicated in proton conduction. The sequence is that of ATP synthase subunit delta from Brucella canis (strain ATCC 23365 / NCTC 10854 / RM-666).